The following is a 143-amino-acid chain: Cell division protein SepF (143 aa).

Belongs to the SepF family. In terms of assembly, homodimer. Interacts with FtsZ.

It localises to the cytoplasm. Its function is as follows. Cell division protein that is part of the divisome complex and is recruited early to the Z-ring. Probably stimulates Z-ring formation, perhaps through the cross-linking of FtsZ protofilaments. Its function overlaps with FtsA. In Geobacillus thermodenitrificans (strain NG80-2), this protein is Cell division protein SepF.